Here is a 201-residue protein sequence, read N- to C-terminus: Small ribosomal subunit protein uS4 (201 aa).

The tract at residues 28-47 (KKNYPPGQHGNSRKRKTSEY) is disordered. Residues 92–155 (GRLDNIVFRL…KSLEVIANSL (64 aa)) enclose the S4 RNA-binding domain.

The protein belongs to the universal ribosomal protein uS4 family. As to quaternary structure, part of the 30S ribosomal subunit. Contacts protein S5. The interaction surface between S4 and S5 is involved in control of translational fidelity.

In terms of biological role, one of the primary rRNA binding proteins, it binds directly to 16S rRNA where it nucleates assembly of the body of the 30S subunit. Its function is as follows. With S5 and S12 plays an important role in translational accuracy. This chain is Small ribosomal subunit protein uS4, found in Bacteroides fragilis (strain YCH46).